The following is a 319-amino-acid chain: Cobalamin biosynthesis protein CbiB (319 aa).

The next 5 membrane-spanning stretches (helical) occupy residues 52–74 (IGGGVMWVVVVGVTWGVAWGVLA), 79–101 (IHPWFGWSVEVWMIFTTLAGRSL), 155–177 (GIIAPLFFLFLGGAPLAMAYKAV), 207–229 (YLPARLSWLLLGIAAGLCRLSGW), and 296–318 (LMWVASTLALALFIAARCGLSGV).

Belongs to the CobD/CbiB family.

Its subcellular location is the cell membrane. Its pathway is cofactor biosynthesis; adenosylcobalamin biosynthesis; adenosylcobalamin from cob(II)yrinate a,c-diamide: step 4/7. In terms of biological role, converts cobyric acid to cobinamide by the addition of aminopropanol on the F carboxylic group. However, the true cosubstrate could be (R)-1-amino-2-propanol O-2-phosphate, leading to cobinamide phosphate. The chain is Cobalamin biosynthesis protein CbiB from Salmonella typhi.